Here is a 223-residue protein sequence, read N- to C-terminus: Neurotrophic factor BDNF precursor form (223 aa).

Residues 1–5 form the signal peptide; the sequence is SCMKA. A propeptide spanning residues 6 to 114 is cleaved from the precursor; it reads APMKEISIRG…AANMSMRVRR (109 aa). An N-linked (GlcNAc...) asparagine glycan is attached at asparagine 107. Cystine bridges form between cysteine 127-cysteine 194 and cysteine 172-cysteine 223.

It belongs to the NGF-beta family.

Its subcellular location is the secreted. Functionally, promotes the survival of neuronal populations that are all located either in the central nervous system or directly connected to it. The polypeptide is Neurotrophic factor BDNF precursor form (BDNF) (Acrochordus javanicus (Javan wart snake)).